The following is a 70-amino-acid chain: Protein SlyX homolog (70 aa).

The protein belongs to the SlyX family.

This chain is Protein SlyX homolog, found in Shewanella pealeana (strain ATCC 700345 / ANG-SQ1).